Reading from the N-terminus, the 476-residue chain is Cysteine--tRNA ligase (476 aa).

Cysteine 31 provides a ligand contact to Zn(2+). The 'HIGH' region motif lies at 33 to 43; it reads PTVYNYAHIGN. Residues cysteine 211, histidine 236, and glutamate 240 each coordinate Zn(2+). Positions 269-273 match the 'KMSKS' region motif; sequence KMSKS. Residue lysine 272 coordinates ATP.

This sequence belongs to the class-I aminoacyl-tRNA synthetase family. In terms of assembly, monomer. Requires Zn(2+) as cofactor.

It localises to the cytoplasm. The catalysed reaction is tRNA(Cys) + L-cysteine + ATP = L-cysteinyl-tRNA(Cys) + AMP + diphosphate. The polypeptide is Cysteine--tRNA ligase (Xanthomonas euvesicatoria pv. vesicatoria (strain 85-10) (Xanthomonas campestris pv. vesicatoria)).